Here is a 112-residue protein sequence, read N- to C-terminus: Large ribosomal subunit protein bL17 (112 aa).

The protein belongs to the bacterial ribosomal protein bL17 family. In terms of assembly, part of the 50S ribosomal subunit. Contacts protein L32.

In Carboxydothermus hydrogenoformans (strain ATCC BAA-161 / DSM 6008 / Z-2901), this protein is Large ribosomal subunit protein bL17.